Consider the following 109-residue polypeptide: Phosphoribosyl-AMP cyclohydrolase (109 aa).

Asp-80 is a Mg(2+) binding site. Cys-81 is a Zn(2+) binding site. Residues Asp-82 and Asp-84 each contribute to the Mg(2+) site. Zn(2+) contacts are provided by Cys-97 and Cys-104.

Belongs to the PRA-CH family. Homodimer. Requires Mg(2+) as cofactor. It depends on Zn(2+) as a cofactor.

It localises to the cytoplasm. It catalyses the reaction 1-(5-phospho-beta-D-ribosyl)-5'-AMP + H2O = 1-(5-phospho-beta-D-ribosyl)-5-[(5-phospho-beta-D-ribosylamino)methylideneamino]imidazole-4-carboxamide. The protein operates within amino-acid biosynthesis; L-histidine biosynthesis; L-histidine from 5-phospho-alpha-D-ribose 1-diphosphate: step 3/9. In terms of biological role, catalyzes the hydrolysis of the adenine ring of phosphoribosyl-AMP. The chain is Phosphoribosyl-AMP cyclohydrolase from Clostridium beijerinckii (strain ATCC 51743 / NCIMB 8052) (Clostridium acetobutylicum).